The primary structure comprises 223 residues: Guanylate kinase (223 aa).

A disordered region spans residues 1–22; it reads MTADGGPDVRHGTRPEPSGDGR. Residues 7-19 are compositionally biased toward basic and acidic residues; that stretch reads PDVRHGTRPEPSG. The Guanylate kinase-like domain maps to 21 to 201; sequence GRVVVLSGPS…ACAELVSLLV (181 aa). Position 28-35 (28-35) interacts with ATP; that stretch reads GPSAVGKS. A disordered region spans residues 204-223; it reads APDRHDTSGRTGRQTTSHPD. Residues 212–223 are compositionally biased toward polar residues; it reads GRTGRQTTSHPD.

It belongs to the guanylate kinase family.

It localises to the cytoplasm. It carries out the reaction GMP + ATP = GDP + ADP. Its function is as follows. Essential for recycling GMP and indirectly, cGMP. The chain is Guanylate kinase from Mycolicibacterium paratuberculosis (strain ATCC BAA-968 / K-10) (Mycobacterium paratuberculosis).